Reading from the N-terminus, the 309-residue chain is D-galacturonate reductase (309 aa).

Y50 serves as the catalytic Proton donor. Residue H109 participates in substrate binding. 210 to 264 is an NADP(+) binding site; it reads SPLGSTGSPLMSADPVVKIAEKKGISPTTVLLSYHVNRGSTVLAKSVTPARIKAN.

It belongs to the aldo/keto reductase family.

It carries out the reaction L-galactonate + NADP(+) = aldehydo-D-galacturonate + NADPH + H(+). It functions in the pathway carbohydrate acid metabolism. Its function is as follows. Mediates the reduction of D-galacturonate to L-galactonate, the first step in D-galacturonate catabolic process. Also has activity with D-glucuronate and DL-glyceraldehyde. No activity is observed with D-glucose, D-fructose, D-xylose, D-galactose, L-arabinose or D-mannose. Activity is seen only with NADPH and not with NADH. The sequence is that of D-galacturonate reductase (gar1) from Hypocrea jecorina (Trichoderma reesei).